The chain runs to 245 residues: U21-ctenitoxin-Pn1a (245 aa).

A Peptidase S1 domain is found at 1–245; sequence IVYGTVTTPG…FRSWMDKVMT (245 aa). A disulfide bridge links Cys30 with Cys46. Catalysis depends on charge relay system residues His45 and Asp95. 2 disulfides stabilise this stretch: Cys161–Cys183 and Cys192–Cys221. Ser196 functions as the Charge relay system in the catalytic mechanism.

Expressed by the venom gland.

It localises to the secreted. Protease. Hydrolyzes gelatin and succinyl casein. The chain is U21-ctenitoxin-Pn1a from Phoneutria nigriventer (Brazilian armed spider).